The primary structure comprises 122 residues: Large ribosomal subunit protein uL14 (122 aa).

The protein belongs to the universal ribosomal protein uL14 family. Part of the 50S ribosomal subunit. Forms a cluster with proteins L3 and L19. In the 70S ribosome, L14 and L19 interact and together make contacts with the 16S rRNA in bridges B5 and B8.

Binds to 23S rRNA. Forms part of two intersubunit bridges in the 70S ribosome. The chain is Large ribosomal subunit protein uL14 from Wolinella succinogenes (strain ATCC 29543 / DSM 1740 / CCUG 13145 / JCM 31913 / LMG 7466 / NCTC 11488 / FDC 602W) (Vibrio succinogenes).